The sequence spans 157 residues: Phosphopantetheine adenylyltransferase (157 aa).

S9 contacts substrate. Residues 9–10 and H17 each bind ATP; that span reads SF. Residues K41, L73, and K87 each coordinate substrate. Residues 88–90, E98, and 123–129 contribute to the ATP site; these read GLR and YSFLSSS.

The protein belongs to the bacterial CoaD family. In terms of assembly, homohexamer. Requires Mg(2+) as cofactor.

It is found in the cytoplasm. The catalysed reaction is (R)-4'-phosphopantetheine + ATP + H(+) = 3'-dephospho-CoA + diphosphate. It functions in the pathway cofactor biosynthesis; coenzyme A biosynthesis; CoA from (R)-pantothenate: step 4/5. Reversibly transfers an adenylyl group from ATP to 4'-phosphopantetheine, yielding dephospho-CoA (dPCoA) and pyrophosphate. In Alkaliphilus oremlandii (strain OhILAs) (Clostridium oremlandii (strain OhILAs)), this protein is Phosphopantetheine adenylyltransferase.